The chain runs to 216 residues: uncharacterized protein (216 aa).

Residues 1–21 (MTIVHFVGSLFFFFFFSYIFF) traverse the membrane as a helical segment.

Its subcellular location is the membrane. This is an uncharacterized protein from Saccharomyces cerevisiae (strain ATCC 204508 / S288c) (Baker's yeast).